A 335-amino-acid chain; its full sequence is MTTVTVTTEIPPRDKMEDNSALYESTSAHIIEETEYVKKIRTTLQKIRTQMFKDEIRHDSTNHKLDAKHCGNLQQGSDSEMDPSCCSLDLLMKKIKGKDLQLLEMNKENEVLKIKLQASREAGAAALRNVAQRLFENYQTQSEEVRKKQEDSKQLLQVNKLEKEQKLKQHVENLNQVAEKLEEKHSQITELENLVQRMEKEKRTLLERKLSLENKLLQLKSSATYGKSCQDLQREISILQEQISHLQFVIHSQHQNLRSVIQEMEGLKNNLKEQDKRIENLREKVNILEAQNKELKTQVALSSETPRTKVSKAVSTSELKTEGVSPYLMLIRLRK.

A coiled-coil region spans residues 101 to 305 (QLLEMNKENE…KTQVALSSET (205 aa)).

Interacts with CEP170. Expressed in bone marrow, colon, small intestine, spleen, testis, trachea and cutaneous T-cell lymphoma (CTCL).

It localises to the cytoplasm. It is found in the cytoskeleton. The protein localises to the microtubule organizing center. The protein resides in the centrosome. Its subcellular location is the centriole. Functionally, centriolar protein required for centriole subdistal appendage assembly and microtubule anchoring in interphase cells. Together with CCDC120, cooperate with subdistal appendage components ODF2, NIN and CEP170 for hierarchical subdistal appendage assembly. This chain is Coiled-coil domain-containing protein 68 (CCDC68), found in Homo sapiens (Human).